The sequence spans 475 residues: E3 ubiquitin-protein ligase TRIM21 (475 aa).

The RING-type zinc-finger motif lies at 16-55 (CPICLDPFVEPVSIECGHSFCQECISQVGKGGGSVCPVCR). Zn(2+)-binding residues include Cys-92, His-95, Cys-114, and His-120. The B box-type zinc-finger motif lies at 92–123 (CAVHGERLHLFCEKDGKALCWVCAQSRKHRDH). Residues 128 to 238 (LEEAAQEYQE…ISELDRRCHS (111 aa)) adopt a coiled-coil conformation. Ser-266 is subject to Phosphoserine. The B30.2/SPRY domain maps to 268 to 465 (ELRSVCHVPG…NTAPLTLCPL (198 aa)).

Belongs to the TRIM/RBCC family. As to quaternary structure, homotrimer. Interacts (via C-terminus) with IRF8 (via C-terminus). Component of a SCF(SKP2)-like complex containing CUL1, SKP1, TRIM21 and SKP2. Interacts with CALR, CUL1, FBXW11, HSPA5, IKBKB, IRF3, SKP1 and VCP. Interacts with SKP2; the interaction with SKP2 does not depend on an intact F-box domain. Interacts (via N-terminus and C-terminus) with DCP2 (via N-terminus and C-terminus). Interacts with ULK1, BECN1 and with ATG8 family members, including GABARAP, GABARAPL1, GABARAPL2 and MAP1LC3C/LC3C. Interacts with TRIM21 and SQSTM1/sequestosome 1. Interacts with IRF3. Interacts (via the SPRY domain) with NMI (via coiled-coil domain); the interaction promotes 'Lys-63'-linked ubiquitination of NMI. Interacts with IFI35 and NMI; the interaction facilitates NMI-IFI35 complex formation. In terms of assembly, (Microbial infection) Interacts (via B30.2/SPRY domain) with severe fever with thrombocytopenia syndrome virus (SFTSV) NSs; this interaction activates NFE2L2-mediated transcriptional activation of antioxidant genes. Autoubiquitinated; does not lead to its proteasomal degradation. Deubiquitinated by USP4; leading to its stabilization. In terms of tissue distribution, isoform 1 and isoform 2 are expressed in fetal and adult heart and fetal lung.

The protein resides in the cytoplasm. It is found in the cytoplasmic vesicle. The protein localises to the autophagosome. It localises to the nucleus. Its subcellular location is the P-body. The protein resides in the stress granule. It carries out the reaction S-ubiquitinyl-[E2 ubiquitin-conjugating enzyme]-L-cysteine + [acceptor protein]-L-lysine = [E2 ubiquitin-conjugating enzyme]-L-cysteine + N(6)-ubiquitinyl-[acceptor protein]-L-lysine.. Its pathway is protein modification; protein ubiquitination. E3 ubiquitin-protein ligase whose activity is dependent on E2 enzymes, UBE2D1, UBE2D2, UBE2E1 and UBE2E2. Forms a ubiquitin ligase complex in cooperation with the E2 UBE2D2 that is used not only for the ubiquitination of USP4 and IKBKB but also for its self-ubiquitination. Component of cullin-RING-based SCF (SKP1-CUL1-F-box protein) E3 ubiquitin-protein ligase complexes such as SCF(SKP2)-like complexes. A TRIM21-containing SCF(SKP2)-like complex is shown to mediate ubiquitination of CDKN1B ('Thr-187' phosphorylated-form), thereby promoting its degradation by the proteasome. Monoubiquitinates IKBKB that will negatively regulates Tax-induced NF-kappa-B signaling. Negatively regulates IFN-beta production post-pathogen recognition by catalyzing polyubiquitin-mediated degradation of IRF3. Mediates the ubiquitin-mediated proteasomal degradation of IgG1 heavy chain, which is linked to the VCP-mediated ER-associated degradation (ERAD) pathway. Promotes IRF8 ubiquitination, which enhanced the ability of IRF8 to stimulate cytokine genes transcription in macrophages. Plays a role in the regulation of the cell cycle progression. Enhances the decapping activity of DCP2. Exists as a ribonucleoprotein particle present in all mammalian cells studied and composed of a single polypeptide and one of four small RNA molecules. At least two isoforms are present in nucleated and red blood cells, and tissue specific differences in RO/SSA proteins have been identified. The common feature of these proteins is their ability to bind HY RNAs.2. Involved in the regulation of innate immunity and the inflammatory response in response to IFNG/IFN-gamma. Organizes autophagic machinery by serving as a platform for the assembly of ULK1, Beclin 1/BECN1 and ATG8 family members and recognizes specific autophagy targets, thus coordinating target recognition with assembly of the autophagic apparatus and initiation of autophagy. Also regulates autophagy through FIP200/RB1CC1 ubiquitination and subsequent decreased protein stability. Represses the innate antiviral response by facilitating the formation of the NMI-IFI35 complex through 'Lys-63'-linked ubiquitination of NMI. During viral infection, promotes cell pyroptosis by mediating 'Lys-6'-linked ubiquitination of ISG12a/IFI27, facilitating its translocation into the mitochondria and subsequent CASP3 activation. When up-regulated through the IFN/JAK/STAT signaling pathway, promotes 'Lys-27'-linked ubiquitination of MAVS, leading to the recruitment of TBK1 and up-regulation of innate immunity. Mediates 'Lys-63'-linked polyubiquitination of G3BP1 in response to heat shock, leading to stress granule disassembly. In Homo sapiens (Human), this protein is E3 ubiquitin-protein ligase TRIM21.